Reading from the N-terminus, the 292-residue chain is Shikimate dehydrogenase (NADP(+)) (292 aa).

Residues 25 to 27 (SKS) and Thr-72 contribute to the shikimate site. Catalysis depends on Lys-76, which acts as the Proton acceptor. Positions 97 and 113 each coordinate shikimate. NADP(+) contacts are provided by residues 137-141 (GAGGA), 161-166 (NRTQSK), and Met-230. Tyr-232 contacts shikimate. An NADP(+)-binding site is contributed by Gly-254.

The protein belongs to the shikimate dehydrogenase family. In terms of assembly, homodimer.

It catalyses the reaction shikimate + NADP(+) = 3-dehydroshikimate + NADPH + H(+). It participates in metabolic intermediate biosynthesis; chorismate biosynthesis; chorismate from D-erythrose 4-phosphate and phosphoenolpyruvate: step 4/7. Its function is as follows. Involved in the biosynthesis of the chorismate, which leads to the biosynthesis of aromatic amino acids. Catalyzes the reversible NADPH linked reduction of 3-dehydroshikimate (DHSA) to yield shikimate (SA). This Shewanella sp. (strain ANA-3) protein is Shikimate dehydrogenase (NADP(+)).